The following is an 815-amino-acid chain: Phenylalanine--tRNA ligase beta subunit (815 aa).

Residues 39 to 148 (ATELQKFEVA…EYAVVGDNFT (110 aa)) enclose the tRNA-binding domain. The B5 domain occupies 420–495 (LQKIPLDFSV…RIYGYDKIES (76 aa)). Mg(2+) contacts are provided by D473, D479, E482, and E483. Residues 721–814 (SDFQANFRDY…ISQKFQGTLR (94 aa)) enclose the FDX-ACB domain.

It belongs to the phenylalanyl-tRNA synthetase beta subunit family. Type 1 subfamily. In terms of assembly, tetramer of two alpha and two beta subunits. It depends on Mg(2+) as a cofactor.

Its subcellular location is the cytoplasm. The enzyme catalyses tRNA(Phe) + L-phenylalanine + ATP = L-phenylalanyl-tRNA(Phe) + AMP + diphosphate + H(+). This is Phenylalanine--tRNA ligase beta subunit from Rickettsia typhi (strain ATCC VR-144 / Wilmington).